The sequence spans 175 residues: Type II restriction enzyme NgoBV (175 aa).

It carries out the reaction Endonucleolytic cleavage of DNA to give specific double-stranded fragments with terminal 5'-phosphates.. Functionally, a P subtype restriction enzyme that recognizes the double-stranded sequence 5'-GGNNCC-3'; the cleavage site is unknown. This is Type II restriction enzyme NgoBV (ngoBVR) from Neisseria gonorrhoeae.